We begin with the raw amino-acid sequence, 334 residues long: N-acetyl-S-alkylcysteine monooxygenase (334 aa).

It to bacterial alkanal monooxygenase alpha and beta chains.

The catalysed reaction is N-acetyl-S-benzyl-L-cysteine + FMNH2 + O2 = (R)-N-acetyl-S-benzyl-L-cysteine sulfoxide + FMN + H2O + H(+). The enzyme catalyses N-acetyl-S-methyl-L-cysteine + FMNH2 + O2 = (R)-N-acetyl-S-methyl-L-cysteine sulfoxide + FMN + H2O + H(+). Its pathway is amino-acid metabolism. In terms of biological role, involved in a cysteine salvage pathway from S-alkylcysteine. Catalyzes the oxidation of N-acetyl-S-benzyl-L-cysteine and N-acetyl-S-methyl-L-cysteine to (R)-N-acetyl-S-benzyl-L-cysteine sulfoxide and (R)-N-acetyl-S-methyl-L-cysteine sulfoxide, respectively. This pathway is likely important in the catabolism of alkylated cysteine generated by proteolysis of alkylated glutathione formed in the detoxification of a wide range of electrophiles. The chain is N-acetyl-S-alkylcysteine monooxygenase from Bacillus subtilis (strain 168).